Here is a 115-residue protein sequence, read N- to C-terminus: Small ribosomal subunit protein uS13 (115 aa).

The segment at 92–115 is disordered; the sequence is RRGLPVRGQNTKNNARTRKGSKRK. Positions 106–115 are enriched in basic residues; that stretch reads ARTRKGSKRK.

It belongs to the universal ribosomal protein uS13 family. Part of the 30S ribosomal subunit. Forms a loose heterodimer with protein S19. Forms two bridges to the 50S subunit in the 70S ribosome.

Its function is as follows. Located at the top of the head of the 30S subunit, it contacts several helices of the 16S rRNA. In the 70S ribosome it contacts the 23S rRNA (bridge B1a) and protein L5 of the 50S subunit (bridge B1b), connecting the 2 subunits; these bridges are implicated in subunit movement. Contacts the tRNAs in the A and P-sites. This chain is Small ribosomal subunit protein uS13, found in Lactobacillus gasseri (strain ATCC 33323 / DSM 20243 / BCRC 14619 / CIP 102991 / JCM 1131 / KCTC 3163 / NCIMB 11718 / NCTC 13722 / AM63).